Reading from the N-terminus, the 755-residue chain is Polyribonucleotide nucleotidyltransferase (755 aa).

The Mg(2+) site is built by D482 and D488. The KH domain occupies 549 to 608; that stretch reads PRMVSFYIDKDKISAAIGAKGKNIRSVCERSNAKIEIGDDGKVSVFAMSSAEAEIAKNMM. Residues 618–686 form the S1 motif domain; that stretch reads GAIVDVKVVK…KGGCPKLSRR (69 aa). Positions 702-714 are enriched in basic and acidic residues; that stretch reads NEEKKDSSNDRDY. The interval 702-755 is disordered; sequence NEEKKDSSNDRDYYNSPFNRKSGHRKRPVHSRSSFSNRNNRPKFGNDDSSSSFY. The span at 722-731 shows a compositional bias: basic residues; that stretch reads KSGHRKRPVH.

This sequence belongs to the polyribonucleotide nucleotidyltransferase family. Mg(2+) is required as a cofactor.

Its subcellular location is the cytoplasm. It carries out the reaction RNA(n+1) + phosphate = RNA(n) + a ribonucleoside 5'-diphosphate. Functionally, involved in mRNA degradation. Catalyzes the phosphorolysis of single-stranded polyribonucleotides processively in the 3'- to 5'-direction. This Wolbachia sp. subsp. Brugia malayi (strain TRS) protein is Polyribonucleotide nucleotidyltransferase.